Reading from the N-terminus, the 250-residue chain is ATP synthase subunit a (250 aa).

6 helical membrane-spanning segments follow: residues 31 to 51, 85 to 105, 115 to 135, 144 to 164, 194 to 214, and 217 to 237; these read SAYM…GMAG, FFPL…IGII, LIVT…YGLY, LFVP…IEVI, FVGM…LPLG, and VAVT…FTIL.

The protein belongs to the ATPase A chain family. As to quaternary structure, F-type ATPases have 2 components, CF(1) - the catalytic core - and CF(0) - the membrane proton channel. CF(1) has five subunits: alpha(3), beta(3), gamma(1), delta(1), epsilon(1). CF(0) has four main subunits: a, b, b' and c.

The protein resides in the cell inner membrane. Key component of the proton channel; it plays a direct role in the translocation of protons across the membrane. This chain is ATP synthase subunit a, found in Rhodopseudomonas palustris (strain BisB5).